The chain runs to 71 residues: Omega-conotoxin-like CnVIIE (71 aa).

The signal sequence occupies residues 1-22 (MKLTCVVIVAVLLLTACQLITA). Residues 23–45 (DDSRGTQKHRALRSDTKLSMSTR) constitute a propeptide that is removed on maturation. 3 disulfides stabilise this stretch: Cys46-Cys61, Cys53-Cys65, and Cys60-Cys70. Residue Pro52 is modified to 4-hydroxyproline; partial. Cys70 is subject to Cysteine amide.

This sequence belongs to the conotoxin M superfamily. As to expression, expressed by the venom duct.

The protein localises to the secreted. Omega-conotoxins act at presynaptic membranes, they bind and block voltage-gated calcium channels (Cav). The sequence is that of Omega-conotoxin-like CnVIIE from Conus consors (Singed cone).